We begin with the raw amino-acid sequence, 262 residues long: Hydroxyacylglutathione hydrolase (262 aa).

Zn(2+)-binding residues include His-53, His-55, Asp-57, His-58, His-111, Asp-128, and His-166.

This sequence belongs to the metallo-beta-lactamase superfamily. Glyoxalase II family. As to quaternary structure, monomer. Requires Zn(2+) as cofactor.

It catalyses the reaction an S-(2-hydroxyacyl)glutathione + H2O = a 2-hydroxy carboxylate + glutathione + H(+). The protein operates within secondary metabolite metabolism; methylglyoxal degradation; (R)-lactate from methylglyoxal: step 2/2. In terms of biological role, thiolesterase that catalyzes the hydrolysis of S-D-lactoyl-glutathione to form glutathione and D-lactic acid. The chain is Hydroxyacylglutathione hydrolase from Nitrosomonas europaea (strain ATCC 19718 / CIP 103999 / KCTC 2705 / NBRC 14298).